A 329-amino-acid polypeptide reads, in one-letter code: Urease accessory protein UreD 2 (329 aa).

Residues 100 to 120 (YSRPSDSSKFTNGTQSANSNT) are disordered. Positions 103–120 (PSDSSKFTNGTQSANSNT) are enriched in polar residues.

The protein belongs to the UreD family. As to quaternary structure, ureD, UreF and UreG form a complex that acts as a GTP-hydrolysis-dependent molecular chaperone, activating the urease apoprotein by helping to assemble the nickel containing metallocenter of UreC. The UreE protein probably delivers the nickel.

Its subcellular location is the cytoplasm. Functionally, required for maturation of urease via the functional incorporation of the urease nickel metallocenter. The chain is Urease accessory protein UreD 2 from Psychrobacter cryohalolentis (strain ATCC BAA-1226 / DSM 17306 / VKM B-2378 / K5).